A 376-amino-acid chain; its full sequence is Anhydro-N-acetylmuramic acid kinase (376 aa).

11–18 (GTSMDGVD) serves as a coordination point for ATP.

The protein belongs to the anhydro-N-acetylmuramic acid kinase family.

It catalyses the reaction 1,6-anhydro-N-acetyl-beta-muramate + ATP + H2O = N-acetyl-D-muramate 6-phosphate + ADP + H(+). Its pathway is amino-sugar metabolism; 1,6-anhydro-N-acetylmuramate degradation. It participates in cell wall biogenesis; peptidoglycan recycling. In terms of biological role, catalyzes the specific phosphorylation of 1,6-anhydro-N-acetylmuramic acid (anhMurNAc) with the simultaneous cleavage of the 1,6-anhydro ring, generating MurNAc-6-P. Is required for the utilization of anhMurNAc either imported from the medium or derived from its own cell wall murein, and thus plays a role in cell wall recycling. The protein is Anhydro-N-acetylmuramic acid kinase of Acinetobacter baylyi (strain ATCC 33305 / BD413 / ADP1).